We begin with the raw amino-acid sequence, 426 residues long: Glutamate-1-semialdehyde 2,1-aminomutase (426 aa).

Lys-265 is modified (N6-(pyridoxal phosphate)lysine).

Belongs to the class-III pyridoxal-phosphate-dependent aminotransferase family. HemL subfamily. As to quaternary structure, homodimer. Pyridoxal 5'-phosphate serves as cofactor.

Its subcellular location is the cytoplasm. The catalysed reaction is (S)-4-amino-5-oxopentanoate = 5-aminolevulinate. The protein operates within porphyrin-containing compound metabolism; protoporphyrin-IX biosynthesis; 5-aminolevulinate from L-glutamyl-tRNA(Glu): step 2/2. This chain is Glutamate-1-semialdehyde 2,1-aminomutase, found in Akkermansia muciniphila (strain ATCC BAA-835 / DSM 22959 / JCM 33894 / BCRC 81048 / CCUG 64013 / CIP 107961 / Muc).